We begin with the raw amino-acid sequence, 370 residues long: Histidinol-phosphate aminotransferase (370 aa).

Lysine 230 carries the N6-(pyridoxal phosphate)lysine modification.

It belongs to the class-II pyridoxal-phosphate-dependent aminotransferase family. Histidinol-phosphate aminotransferase subfamily. As to quaternary structure, homodimer. Requires pyridoxal 5'-phosphate as cofactor.

It catalyses the reaction L-histidinol phosphate + 2-oxoglutarate = 3-(imidazol-4-yl)-2-oxopropyl phosphate + L-glutamate. It participates in amino-acid biosynthesis; L-histidine biosynthesis; L-histidine from 5-phospho-alpha-D-ribose 1-diphosphate: step 7/9. The polypeptide is Histidinol-phosphate aminotransferase (Leptospira interrogans serogroup Icterohaemorrhagiae serovar Lai (strain 56601)).